The following is a 190-amino-acid chain: Large ribosomal subunit protein bL9 (190 aa).

It belongs to the bacterial ribosomal protein bL9 family.

Binds to the 23S rRNA. This chain is Large ribosomal subunit protein bL9, found in Methylorubrum populi (strain ATCC BAA-705 / NCIMB 13946 / BJ001) (Methylobacterium populi).